The sequence spans 801 residues: MSFDDKVLEIPQTLPMLPVRDIVVFPYMIIPLFVGRDASIRSVEEALAKNRLIFLASQKDITEENPSPDNIYTVGTVAMIMRMRKLSDGRVKILIQGVAKGRVKNFTKTSPSFEVAVEKIEETPVQKTVVENEALIRTAKEHIERIIALGRPLSPDILLVLDDVSDPGRIADLIASNLGIKVQDAQKVLETSDATERLKLVNEILAAELEVMQTQSKNRTGAKDDMSKSQREYFLREQMKAIKNELGEGDSKSEEMDELREKLVNAGMPTHVEAEALKQLGRLERMHPDASEATMVRTYLDWMADLPWSKKSEDHIDLKRSKEILDEDHYELEKAKDRIMEFLAVRKLKPNLKGPILCFGGPPGVGKTSLGKSIARAMGREYFRIALGGVKDEAEIRGHRRTYVGAMPGKIIQALRQAKTSNPVIVLDEIDKLGSDFRGDPSAAMLEVLDPEQNATFRDNYLNVDFDLSNVLFIATANVLENIPPALRDRMEILNIPGYTENDKLLITKKHLIKRQIEANGITEENIKFTDEGIKYLIAGYTREAGLRNLEREVGSVCRKVAKMVVMEETNFVEVNATTVPELLGPPRFQRDDKIADSQVGVVQGLAWTQAGGEVLTIEALKMKGKGHLALTGQLGDVMKESAHAAMSYARAHQEELGIPEDFFEKYDVHVHLPAGAIPKDGPSAGITLTTALVSLMTGTPVRHDIAMTGEVTLQGRVLPVGGIREKCLAALNLGITNIIIPMACQKDLADIPKVFKDKINFILAENLDEVFAVAFDKSAKGQEKKPAAKKDPKKTKSLAA.

Positions 14–209 (LPMLPVRDIV…LVNEILAAEL (196 aa)) constitute a Lon N-terminal domain. Position 361–368 (361–368 (GPPGVGKT)) interacts with ATP. The Lon proteolytic domain occupies 597–778 (DSQVGVVQGL…DEVFAVAFDK (182 aa)). Catalysis depends on residues S684 and K727. Positions 780–791 (AKGQEKKPAAKK) are enriched in basic and acidic residues. Residues 780–801 (AKGQEKKPAAKKDPKKTKSLAA) are disordered. The span at 792 to 801 (DPKKTKSLAA) shows a compositional bias: basic residues.

Belongs to the peptidase S16 family. Homohexamer. Organized in a ring with a central cavity.

The protein localises to the cytoplasm. It carries out the reaction Hydrolysis of proteins in presence of ATP.. Its function is as follows. ATP-dependent serine protease that mediates the selective degradation of mutant and abnormal proteins as well as certain short-lived regulatory proteins. Required for cellular homeostasis and for survival from DNA damage and developmental changes induced by stress. Degrades polypeptides processively to yield small peptide fragments that are 5 to 10 amino acids long. Binds to DNA in a double-stranded, site-specific manner. This chain is Lon protease 2, found in Bdellovibrio bacteriovorus (strain ATCC 15356 / DSM 50701 / NCIMB 9529 / HD100).